Consider the following 326-residue polypeptide: Thiazole synthase (326 aa).

The active-site Schiff-base intermediate with DXP is the Lys-168. 1-deoxy-D-xylulose 5-phosphate is bound by residues Gly-229, Ala-255–Gly-256, and Asn-277–Thr-278.

It belongs to the ThiG family. In terms of assembly, homotetramer. Forms heterodimers with either ThiH or ThiS.

It is found in the cytoplasm. The catalysed reaction is [ThiS sulfur-carrier protein]-C-terminal-Gly-aminoethanethioate + 2-iminoacetate + 1-deoxy-D-xylulose 5-phosphate = [ThiS sulfur-carrier protein]-C-terminal Gly-Gly + 2-[(2R,5Z)-2-carboxy-4-methylthiazol-5(2H)-ylidene]ethyl phosphate + 2 H2O + H(+). The protein operates within cofactor biosynthesis; thiamine diphosphate biosynthesis. Its function is as follows. Catalyzes the rearrangement of 1-deoxy-D-xylulose 5-phosphate (DXP) to produce the thiazole phosphate moiety of thiamine. Sulfur is provided by the thiocarboxylate moiety of the carrier protein ThiS. In vitro, sulfur can be provided by H(2)S. The chain is Thiazole synthase from Magnetococcus marinus (strain ATCC BAA-1437 / JCM 17883 / MC-1).